A 419-amino-acid chain; its full sequence is Probable serine/threonine-protein kinase CST (419 aa).

A lipid anchor (N-myristoyl glycine) is attached at Gly-2. Residue Cys-4 is the site of S-palmitoyl cysteine attachment. Positions 8 to 48 (FSSSSPSKTGLHSHATTNNHSNGTEFSSTTGATTNSSVGQQ) are disordered. The segment covering 15 to 48 (KTGLHSHATTNNHSNGTEFSSTTGATTNSSVGQQ) has biased composition (polar residues). The Protein kinase domain maps to 86 to 368 (FKPDSMLGQG…KEVVEVLEHI (283 aa)). 92-100 (LGQGGFGKV) is an ATP binding site. Ser-117 is subject to Phosphoserine. Lys-124 serves as a coordination point for ATP. A Phosphotyrosine modification is found at Tyr-169. Residue Asp-218 is the Proton acceptor of the active site. Ser-222 bears the Phosphoserine mark. Thr-253 and Thr-258 each carry phosphothreonine. Tyr-266 is modified (phosphotyrosine). A compositionally biased stretch (polar residues) spans 378-390 (SSTKQAVANSSRS). Residues 378–419 (SSTKQAVANSSRSSPHHYRYKAGALGAERKRATPGRFGSVEK) form a disordered region.

Belongs to the protein kinase superfamily. Ser/Thr protein kinase family. Interacts with SOBIR1/EVR and RLK5/HAE. In terms of processing, autophosphorylated on serine, threonine and tyrosine residues.

The protein resides in the cell membrane. The protein localises to the nucleus. The enzyme catalyses L-seryl-[protein] + ATP = O-phospho-L-seryl-[protein] + ADP + H(+). It carries out the reaction L-threonyl-[protein] + ATP = O-phospho-L-threonyl-[protein] + ADP + H(+). In terms of biological role, acts as a spatial inhibitor of signaling that modulates abscission zone cell adhesion and expansion. Acts both directly and indirectly by physically interacting with RLK5/HAE and SOBIR1/EVR at the cell surface. This chain is Probable serine/threonine-protein kinase CST, found in Arabidopsis thaliana (Mouse-ear cress).